Here is a 296-residue protein sequence, read N- to C-terminus: Malonyl-[acyl-carrier protein] O-methyltransferase (296 aa).

Belongs to the methyltransferase superfamily.

The catalysed reaction is malonyl-[ACP] + S-adenosyl-L-methionine = malonyl-[ACP] methyl ester + S-adenosyl-L-homocysteine. Its pathway is cofactor biosynthesis; biotin biosynthesis. Converts the free carboxyl group of a malonyl-thioester to its methyl ester by transfer of a methyl group from S-adenosyl-L-methionine (SAM). It allows to synthesize pimeloyl-ACP via the fatty acid synthetic pathway. This chain is Malonyl-[acyl-carrier protein] O-methyltransferase, found in Methylovorus sp. (strain MP688).